A 70-amino-acid polypeptide reads, in one-letter code: Enhancer of split m6 protein (70 aa).

The chain is Enhancer of split m6 protein from Drosophila melanogaster (Fruit fly).